The chain runs to 433 residues: MESGKSPLEENLQEFTLKEDSELRFEVANGDVMLELVDGRAEVFGTELIQHKKYVFPAGSRVAVFTWKKAVVELVGKTESAYVAEQTPMIIYLNTHAALEQLREHAESVVMQQEQARGPSLMIVGPTDVGKTTVCRILCNYAVRVGRTPIFVDLDVGQGSISVPGTVGALYIEKTADVVEGFDKKAPLVYHFGNLSPGSNIPLYDLLVKQLAEAISKRRKSSQDATYGGVIINTCGWVKGEGYACLVNAAEEFEVDVVIVLDHERLYNELQRDLPSFVKILHQPKSGGVENRSKEVRISSRNAFVHKYFYGTRAMPLYPHTFELSFDEVQFCKIGCERLPIECLPFGMKVDDHRTKVVPIEPSEDLVHHLVSLSMCTAVDQSVLTTNVMGFIVITAVDMEREKLTVLSPQPYPLPSKILILSEVTFIDDKERT.

Residues Glu-22, Arg-61, and 128 to 133 (DVGKTT) each bind ATP.

It belongs to the Clp1 family. Clp1 subfamily.

Its subcellular location is the nucleus. Functionally, required for endonucleolytic cleavage during polyadenylation-dependent pre-mRNA 3'-end formation. This chain is Protein CLP1 homolog, found in Brugia malayi (Filarial nematode worm).